We begin with the raw amino-acid sequence, 335 residues long: Tetraacyldisaccharide 4'-kinase (335 aa).

Position 58 to 65 (58 to 65) interacts with ATP; it reads TVGGSGKT.

Belongs to the LpxK family.

It catalyses the reaction a lipid A disaccharide + ATP = a lipid IVA + ADP + H(+). Its pathway is glycolipid biosynthesis; lipid IV(A) biosynthesis; lipid IV(A) from (3R)-3-hydroxytetradecanoyl-[acyl-carrier-protein] and UDP-N-acetyl-alpha-D-glucosamine: step 6/6. Its function is as follows. Transfers the gamma-phosphate of ATP to the 4'-position of a tetraacyldisaccharide 1-phosphate intermediate (termed DS-1-P) to form tetraacyldisaccharide 1,4'-bis-phosphate (lipid IVA). This Shewanella sp. (strain MR-7) protein is Tetraacyldisaccharide 4'-kinase.